The primary structure comprises 389 residues: P2X purinoceptor 4a (389 aa).

The Cytoplasmic segment spans residues 1–36 (MSESVGCCDSVSQCFFDYYTSKILIIRSKKVGTLNR). A helical transmembrane segment spans residues 37-57 (FTQALVIAYVIGYVCVYNKGY). Over 58 to 343 (QDTDTVLSSV…NIIPTLLNMG (286 aa)) the chain is Extracellular. Lys-70 and Lys-72 together coordinate ATP. CTP contacts are provided by Lys-70 and Lys-72. Asn-78 and Asn-113 each carry an N-linked (GlcNAc...) asparagine glycan. Cystine bridges form between Cys-119–Cys-168, Cys-129–Cys-152, and Cys-135–Cys-162. A CTP-binding site is contributed by Arg-143. N-linked (GlcNAc...) asparagine glycosylation is present at Asn-187. ATP-binding residues include Thr-189 and Leu-191. Residue Thr-189 coordinates CTP. Asn-213 carries N-linked (GlcNAc...) asparagine glycosylation. 2 cysteine pairs are disulfide-bonded: Cys-220/Cys-230 and Cys-264/Cys-273. ATP-binding residues include Asn-296, Arg-298, and Lys-316. Residues Asn-296, Arg-298, and Lys-316 each contribute to the CTP site. The chain crosses the membrane as a helical span at residues 344-364 (AGLALLGLVNVICDWIVLTFM). Residues 365–389 (KRKQHYKEQKYTYVDDFGLLHNEDK) are Cytoplasmic-facing.

Belongs to the P2X receptor family. As to quaternary structure, functional P2XRs are organized as homomeric and heteromeric trimers. Forms homotrimer.

The protein resides in the cell membrane. Its subcellular location is the lysosome membrane. The enzyme catalyses K(+)(in) = K(+)(out). The catalysed reaction is Na(+)(in) = Na(+)(out). It catalyses the reaction Ca(2+)(in) = Ca(2+)(out). Activated by ATP. pH-dependent and inhibited by acidic pH. Its function is as follows. ATP-gated nonselective transmembrane cation channel permeable to potassium, sodium and calcium. CTP, but not GTP or UTP, functions as a weak affinity agonist for P2RX4. Activated by extracellularly released ATP, it plays multiple role in immunity and central nervous system physiology. Could also function as an ATP-gated cation channel of lysosomal membranes. This is P2X purinoceptor 4a (p2rx4a) from Danio rerio (Zebrafish).